A 215-amino-acid chain; its full sequence is Cytochrome b6 (215 aa).

A helical membrane pass occupies residues 32–52 (IFYCLGGITLVCFLIQFATGF). Cys35 serves as a coordination point for heme c. Heme b-binding residues include His86 and His100. 3 helical membrane passes run 90–110 (ASMMVLMMILHVFRVYLTGGF), 116–136 (LTWVSGVILAVITVSFGVTGY), and 186–206 (AHTFVLPWLIAVFMLFHFLMI). Heme b is bound by residues His187 and His202.

Belongs to the cytochrome b family. PetB subfamily. The 4 large subunits of the cytochrome b6-f complex are cytochrome b6, subunit IV (17 kDa polypeptide, PetD), cytochrome f and the Rieske protein, while the 4 small subunits are PetG, PetL, PetM and PetN. The complex functions as a dimer. Requires heme b as cofactor. Heme c serves as cofactor.

It is found in the cellular thylakoid membrane. Component of the cytochrome b6-f complex, which mediates electron transfer between photosystem II (PSII) and photosystem I (PSI), cyclic electron flow around PSI, and state transitions. This Trichormus variabilis (strain ATCC 29413 / PCC 7937) (Anabaena variabilis) protein is Cytochrome b6.